A 523-amino-acid chain; its full sequence is Vanin-like protein 3 (523 aa).

The first 19 residues, 1 to 19 (MAVFLRRFLWLISFTLVLT), serve as a signal peptide directing secretion. Residues 29 to 298 (YIAGVVEYRP…RKLLLAKVPL (270 aa)) enclose the CN hydrolase domain. N64 is a glycosylation site (N-linked (GlcNAc...) asparagine). Residue E74 is the Proton acceptor of the active site. K167 functions as the Proton donor in the catalytic mechanism. 2 N-linked (GlcNAc...) asparagine glycosylation sites follow: N177 and N192. Residue C200 is the Nucleophile of the active site. N330 and N468 each carry an N-linked (GlcNAc...) asparagine glycan. Residue N498 is the site of GPI-anchor amidated asparagine attachment. Residues 499 to 523 (GGAGRLGTLLFLLITPLIMMHLFRE) constitute a propeptide, removed in mature form.

This sequence belongs to the carbon-nitrogen hydrolase superfamily. BTD/VNN family. As to expression, expressed in third instar larvae.

The protein resides in the cell membrane. This chain is Vanin-like protein 3, found in Drosophila melanogaster (Fruit fly).